A 245-amino-acid polypeptide reads, in one-letter code: Carboxy-S-adenosyl-L-methionine synthase (245 aa).

S-adenosyl-L-methionine is bound by residues tyrosine 39, 64–66 (GSS), 117–118 (DI), and arginine 199.

This sequence belongs to the class I-like SAM-binding methyltransferase superfamily. Cx-SAM synthase family. Homodimer.

The catalysed reaction is prephenate + S-adenosyl-L-methionine = carboxy-S-adenosyl-L-methionine + 3-phenylpyruvate + H2O. Functionally, catalyzes the conversion of S-adenosyl-L-methionine (SAM) to carboxy-S-adenosyl-L-methionine (Cx-SAM). The chain is Carboxy-S-adenosyl-L-methionine synthase from Desulfotalea psychrophila (strain LSv54 / DSM 12343).